The sequence spans 560 residues: Factor VII-activating protease (560 aa).

An N-terminal signal peptide occupies residues 1–23 (MFARMSDLHVLLLMALVGKTACG). Asn-54 is a glycosylation site (N-linked (GlcNAc...) asparagine). EGF-like domains follow at residues 73–109 (QADP…NKCQ), 111–148 (VQNT…PSCS), and 150–188 (VVPV…KFCE). 18 cysteine pairs are disulfide-bonded: Cys-77–Cys-88, Cys-82–Cys-97, Cys-99–Cys-108, Cys-115–Cys-125, Cys-120–Cys-136, Cys-138–Cys-147, Cys-154–Cys-165, Cys-159–Cys-176, Cys-178–Cys-187, Cys-194–Cys-276, Cys-215–Cys-257, Cys-246–Cys-271, Cys-301–Cys-435, Cys-347–Cys-363, Cys-355–Cys-424, Cys-447–Cys-515, Cys-477–Cys-493, and Cys-505–Cys-533. The 84-residue stretch at 193 to 276 (DCYVGDGYSY…KWEYCDVSAC (84 aa)) folds into the Kringle domain. Asn-207 is a glycosylation site (N-linked (GlcNAc...) asparagine). One can recognise a Peptidase S1 domain in the interval 314-555 (IYGGFKSTAG…FLNWIKATIK (242 aa)). Active-site charge relay system residues include His-362 and Asp-411. The Charge relay system role is filled by Ser-509.

This sequence belongs to the peptidase S1 family. Heterodimer; disulfide-linked. Heterodimer of a 50 kDa heavy and a 27 kDa light chain linked by a disulfide bond. In terms of processing, proteolytic cleavage at Gly-23 or Met-27 can give rise to the 50 kDa heavy chain (HC) and cleavage at Arg-313 or Lys-319 can give rise to the 27 kDa light chain (LC). The HC can undergo further proteolytic cleavage giving rise to a 26 kDa fragment. The LC can undergo further proteolytic cleavage at Arg-313 leading to a 17-kDa fragment and at Arg-480 leading to a 8-kDa fragment. As to expression, ubiquitously expressed.

The protein localises to the secreted. Cleaves the alpha-chain at multiple sites and the beta-chain between 'Lys-53' and 'Lys-54' but not the gamma-chain of fibrinogen and therefore does not initiate the formation of the fibrin clot and does not cause the fibrinolysis directly. It does not cleave (activate) prothrombin and plasminogen but converts the inactive single chain urinary plasminogen activator (pro-urokinase) to the active two chain form. Activates coagulation factor VII. May function as a tumor suppressor negatively regulating cell proliferation and cell migration. The polypeptide is Factor VII-activating protease (Homo sapiens (Human)).